The following is a 592-amino-acid chain: MNFNLKQKLDLAPKKPGCYLWKNHLNEIIYIGKAKNIYKRVHQYFNGPKDLKTSKLVNEIFYVEFIEVNNENEALLLEANLIKKHKPRYNILLKDNNGYPYILMTKEKYPRLIYTRNFDPKKGKHYGPFASSEMKAYDLYNLLLKLFPLKNCFNKKGRKCEFYDLNLCMKACTHEVSEADYEVMKKKIDYFFHNGADQVLKDLKEKESIASEKFDFEQAKKYLDLQKAINLIFDKQIINLYSAKERIDVLAYQIKENVICIVLFSYVSSQLVSKNTICDFYYGEEQEVITSYLSQYYKDNIKPKILYASLDQANATLLKDSLGIEIINPTSGKMNEIMSLALQNVTNELSQKYDSLVKKEQRINLALDQLKKLIKVDKLNHLEVYDNSNLFNTDKVSAMIVFENNQFNKKKYRKYKIKDQQALGDYHYMYEVIYRRLYQALKNNFVDLPDLIILDGGKHQVLAAKKAIVDLQIDKKINLIGLAKNNKHQTDKIVTFDLDEISLDKSSALYFFLANLQEEVHKFAISFFRKTKAKSLYDSILDQIKGLGKKRKQQLIEHFKTIDEIKKASIASLSQVLPIEIAKKLKQKLDQS.

Residues 14–91 (KKPGCYLWKN…IKKHKPRYNI (78 aa)) enclose the GIY-YIG domain. Residues 197–232 (DQVLKDLKEKESIASEKFDFEQAKKYLDLQKAINLI) form the UVR domain.

Belongs to the UvrC family. In terms of assembly, interacts with UvrB in an incision complex.

Its subcellular location is the cytoplasm. Functionally, the UvrABC repair system catalyzes the recognition and processing of DNA lesions. UvrC both incises the 5' and 3' sides of the lesion. The N-terminal half is responsible for the 3' incision and the C-terminal half is responsible for the 5' incision. In Mycoplasmoides gallisepticum (strain R(low / passage 15 / clone 2)) (Mycoplasma gallisepticum), this protein is UvrABC system protein C.